The primary structure comprises 395 residues: Zinc finger protein 385D (395 aa).

The Matrin-type 1 zinc finger occupies 80–110 (ISCNICQLRFNSDSQAAAHYKGTKHAKKLKA). Residues 169–193 (MTTEITSKVEKSPTTATGNSSCPST) show a composition bias toward polar residues. Residues 169–194 (MTTEITSKVEKSPTTATGNSSCPSTE) form a disordered region. Matrin-type zinc fingers lie at residues 204–234 (LYCS…MLEA) and 267–297 (FHCE…RAAG). The disordered stretch occupies residues 282-309 (LKQHISSRRHKDRAAGKPPKPKYSPYNK).

The protein resides in the nucleus. The protein is Zinc finger protein 385D (ZNF385D) of Homo sapiens (Human).